The chain runs to 416 residues: Serine hydroxymethyltransferase (416 aa).

(6S)-5,6,7,8-tetrahydrofolate-binding positions include Leu118 and 122–124 (GHL). At Lys226 the chain carries N6-(pyridoxal phosphate)lysine. Glu242 provides a ligand contact to (6S)-5,6,7,8-tetrahydrofolate.

The protein belongs to the SHMT family. As to quaternary structure, homodimer. Requires pyridoxal 5'-phosphate as cofactor.

The protein localises to the cytoplasm. The catalysed reaction is (6R)-5,10-methylene-5,6,7,8-tetrahydrofolate + glycine + H2O = (6S)-5,6,7,8-tetrahydrofolate + L-serine. It functions in the pathway one-carbon metabolism; tetrahydrofolate interconversion. Its pathway is amino-acid biosynthesis; glycine biosynthesis; glycine from L-serine: step 1/1. Functionally, catalyzes the reversible interconversion of serine and glycine with tetrahydrofolate (THF) serving as the one-carbon carrier. This reaction serves as the major source of one-carbon groups required for the biosynthesis of purines, thymidylate, methionine, and other important biomolecules. Also exhibits THF-independent aldolase activity toward beta-hydroxyamino acids, producing glycine and aldehydes, via a retro-aldol mechanism. In Helicobacter pylori (strain HPAG1), this protein is Serine hydroxymethyltransferase.